The chain runs to 295 residues: Ribosomal RNA small subunit methyltransferase H (295 aa).

Residues 32–34, D50, F77, D98, and Q105 contribute to the S-adenosyl-L-methionine site; that span reads GGY. The segment at 275 to 295 is disordered; that stretch reads KEISENTRSRSAKLRGIVKEE.

The protein belongs to the methyltransferase superfamily. RsmH family.

It localises to the cytoplasm. It catalyses the reaction cytidine(1402) in 16S rRNA + S-adenosyl-L-methionine = N(4)-methylcytidine(1402) in 16S rRNA + S-adenosyl-L-homocysteine + H(+). In terms of biological role, specifically methylates the N4 position of cytidine in position 1402 (C1402) of 16S rRNA. The chain is Ribosomal RNA small subunit methyltransferase H from Anaplasma phagocytophilum (strain HZ).